The chain runs to 126 residues: Holo-[acyl-carrier-protein] synthase (126 aa).

Mg(2+) is bound by residues D9 and E58.

This sequence belongs to the P-Pant transferase superfamily. AcpS family. The cofactor is Mg(2+).

It localises to the cytoplasm. The enzyme catalyses apo-[ACP] + CoA = holo-[ACP] + adenosine 3',5'-bisphosphate + H(+). Functionally, transfers the 4'-phosphopantetheine moiety from coenzyme A to a Ser of acyl-carrier-protein. The protein is Holo-[acyl-carrier-protein] synthase of Pectobacterium carotovorum subsp. carotovorum (strain PC1).